The chain runs to 105 residues: Transmembrane protein 273 (105 aa).

Residues 1–19 form the signal peptide; the sequence is MNLGVSMLRILFLLDVGGA. Residues 20–38 are Extracellular-facing; it reads QVLATGKTPGAEIDFKYAL. Residues 39–59 form a helical membrane-spanning segment; that stretch reads IGTAVGVAISAGFLALKICMI. Residues 60-105 are Cytoplasmic-facing; the sequence is RRHLFDDDSSDLKSTPGGLSDTIPLKKRAPRRNHNFSKRDAQVIEL.

Its subcellular location is the membrane. This is Transmembrane protein 273 from Homo sapiens (Human).